The following is a 116-amino-acid chain: Phosphoribosyl-ATP pyrophosphatase (116 aa).

Belongs to the PRA-PH family.

The protein resides in the cytoplasm. The catalysed reaction is 1-(5-phospho-beta-D-ribosyl)-ATP + H2O = 1-(5-phospho-beta-D-ribosyl)-5'-AMP + diphosphate + H(+). The protein operates within amino-acid biosynthesis; L-histidine biosynthesis; L-histidine from 5-phospho-alpha-D-ribose 1-diphosphate: step 2/9. The sequence is that of Phosphoribosyl-ATP pyrophosphatase from Bordetella avium (strain 197N).